The following is a 380-amino-acid chain: Apolipoprotein A-IV (380 aa).

An N-terminal signal peptide occupies residues 1 to 20 (MFLKAVVLSLALVAVTGAEA). 13 repeat units span residues 33 to 54 (DYFS…KSEL), 60 to 81 (TLFQ…KKLV), 82 to 103 (PFAT…EEIR), 115 to 136 (PHAT…QRLG), 137 to 158 (PYAE…RQLT), 159 to 180 (PYVE…ASLA), 181 to 202 (PYAE…GRLT), 203 to 224 (PYAD…RSLA), 225 to 246 (PYAQ…FQMK), 247 to 268 (KHAE…QGLV), 269 to 286 (PLVN…EDLQ), 287 to 308 (KSLA…RTVG), and 309 to 330 (PYGE…QKLG). Positions 33–330 (DYFSQLGNNA…QLDTLRQKLG (298 aa)) are 13 X 22 AA approximate tandem repeats. The disordered stretch occupies residues 361–380 (KESQAPALPAQEEMPVPLGG).

The protein belongs to the apolipoprotein A1/A4/E family. As to quaternary structure, homodimer. In terms of tissue distribution, secreted in plasma.

Its subcellular location is the secreted. Its function is as follows. May have a role in chylomicrons and VLDL secretion and catabolism. Required for efficient activation of lipoprotein lipase by ApoC-II; potent activator of LCAT. Apoa-IV is a major component of HDL and chylomicrons. The chain is Apolipoprotein A-IV (APOA4) from Bos taurus (Bovine).